A 688-amino-acid chain; its full sequence is Beta-galactosidase BglY (688 aa).

R118 serves as a coordination point for substrate. C122 serves as a coordination point for Zn(2+). N156 serves as a coordination point for substrate. The active-site Proton donor is the E157. Positions 162, 164, and 167 each coordinate Zn(2+). Catalysis depends on E313, which acts as the Nucleophile. Substrate contacts are provided by residues W321 and 361 to 364; that span reads EKFH.

The protein belongs to the glycosyl hydrolase 42 family.

It catalyses the reaction Hydrolysis of terminal non-reducing beta-D-galactose residues in beta-D-galactosides.. Its activity is regulated as follows. Ca(2+), Mg(2+) and EDTA have little effect on enzyme activity at 1-10 mM. Zn(2+) at 3, 5, 7 or 10 mM inhibits activity by 20%, 30%, 40% and 65%, respectively. Its function is as follows. Hydrolyzes o-nitrophenyl-beta-D-galactopyranoside (ONPG) and p-nitrophenyl-beta-D-fucopyranoside (PNPF), but not p-nitrophenyl-beta-D-glucopyranoside (PNPG), p-nitrophenyl-beta-D-xylopyranoside (PNPX) or p-nitrophenyl-beta-D-arabinopyranoside (PNPA). Also hydrolyzes lactose, including lactose in milk. The chain is Beta-galactosidase BglY (bglY) from Alicyclobacillus acidocaldarius subsp. acidocaldarius (strain ATCC 27009 / DSM 446 / BCRC 14685 / JCM 5260 / KCTC 1825 / NBRC 15652 / NCIMB 11725 / NRRL B-14509 / 104-IA) (Bacillus acidocaldarius).